The chain runs to 448 residues: Glutamyl-tRNA reductase (448 aa).

Residues 52-55 (TCNR), Ser-105, 110-112 (EDQ), and Gln-116 contribute to the substrate site. The Nucleophile role is filled by Cys-53. 184 to 189 (GAGEMG) contributes to the NADP(+) binding site. Positions 406–435 (DPDFGGPDQATPPEFTKGMSVEDIPDGMRD) are disordered.

Belongs to the glutamyl-tRNA reductase family. As to quaternary structure, homodimer.

The enzyme catalyses (S)-4-amino-5-oxopentanoate + tRNA(Glu) + NADP(+) = L-glutamyl-tRNA(Glu) + NADPH + H(+). It participates in porphyrin-containing compound metabolism; protoporphyrin-IX biosynthesis; 5-aminolevulinate from L-glutamyl-tRNA(Glu): step 1/2. Catalyzes the NADPH-dependent reduction of glutamyl-tRNA(Glu) to glutamate 1-semialdehyde (GSA). The polypeptide is Glutamyl-tRNA reductase (Haloarcula marismortui (strain ATCC 43049 / DSM 3752 / JCM 8966 / VKM B-1809) (Halobacterium marismortui)).